The sequence spans 142 residues: VapC ribonuclease R02377 (142 aa).

The PINc domain occupies 3–140; that stretch reads FVDGSVIVAI…YKGNDFSQTD (138 aa). Mg(2+) contacts are provided by Asp5 and Asp115.

Belongs to the PINc/VapC protein family. Mg(2+) is required as a cofactor.

Toxic component of a type II toxin-antitoxin (TA) system. An RNase. The chain is VapC ribonuclease R02377 from Rhizobium meliloti (strain 1021) (Ensifer meliloti).